A 187-amino-acid chain; its full sequence is MPKVSEDHLAARRRQILDGARRCFAEYGYDKATVRRLEQAIGMSRGAIFHHFRDKDALFFALAREDTERMAAVASREGLIGVMRDMLAAPDQFDWLATRLEIARKLRNDPDFSRGWAERSAELAAATTDRLRRQKQANRVRDDVPSDVLRCYLDLVLDGLLARLASGEDPQRLAAVLDLVENSVRRS.

Residues 10 to 70 (AARRRQILDG…ALAREDTERM (61 aa)) form the HTH tetR-type domain. The segment at residues 33–52 (TVRRLEQAIGMSRGAIFHHF) is a DNA-binding region (H-T-H motif).

As to quaternary structure, homodimer.

With respect to regulation, binding to DNA is abolished in the presence of high concentration of iron. Specifically binds to tetracycline, which leads to a conformational change in the structure of the protein and inhibits the DNA binding activity. In terms of biological role, represses the expression of the aconitase gene acn and its own expression, in an iron-responsive manner. Binds to the inverted repeat element present in the upstream region of acn (Rv1475c)-Rv1474c operon. Preferentially binds to major groove of the DNA. This Mycobacterium tuberculosis (strain ATCC 25618 / H37Rv) protein is HTH-type transcriptional repressor Rv1474c.